The following is a 429-amino-acid chain: Probable M18 family aminopeptidase 2 (429 aa).

Positions 82, 156, and 401 each coordinate Zn(2+).

It belongs to the peptidase M18 family. It depends on Zn(2+) as a cofactor.

This Pseudomonas entomophila (strain L48) protein is Probable M18 family aminopeptidase 2.